A 304-amino-acid chain; its full sequence is ATP synthase gamma chain (304 aa).

It belongs to the ATPase gamma chain family. F-type ATPases have 2 components, CF(1) - the catalytic core - and CF(0) - the membrane proton channel. CF(1) has five subunits: alpha(3), beta(3), gamma(1), delta(1), epsilon(1). CF(0) has three main subunits: a, b and c.

Its subcellular location is the cell membrane. In terms of biological role, produces ATP from ADP in the presence of a proton gradient across the membrane. The gamma chain is believed to be important in regulating ATPase activity and the flow of protons through the CF(0) complex. This chain is ATP synthase gamma chain, found in Mycobacterium ulcerans (strain Agy99).